The primary structure comprises 180 residues: Cell division protein SepF (180 aa).

A disordered region spans residues 1-66 (MAFSFKSFFG…NRNGFAYDNG (66 aa)). Residues 12-23 (ADDEEEEYEDSG) show a composition bias toward acidic residues. Low complexity predominate over residues 24 to 57 (YEQQPNQGQQQPVNSQQQNTSNQSYSGYNNQNQN).

Belongs to the SepF family. Homodimer. Interacts with FtsZ.

It localises to the cytoplasm. Cell division protein that is part of the divisome complex and is recruited early to the Z-ring. Probably stimulates Z-ring formation, perhaps through the cross-linking of FtsZ protofilaments. Its function overlaps with FtsA. The sequence is that of Cell division protein SepF from Oenococcus oeni (strain ATCC BAA-331 / PSU-1).